Here is a 1025-residue protein sequence, read N- to C-terminus: Exocyst complex component 6 (1025 aa).

Basic and acidic residues-rich tracts occupy residues 1–10 and 22–52; these read MSNKKQKEEI and MVRD…ENVK. 3 disordered regions span residues 1–122, 135–154, and 666–691; these read MSNK…TRHL, LSSQ…DQAK, and QFGD…DENE. Residues 19–68 are a coiled coil; that stretch reads LKTMVRDKDKEQKEEKREKKEKKRLEKKEAENVKKEKKKEKKELKKIGKA. Positions 71-93 are enriched in low complexity; the sequence is SGSITSDSSTHSGAQEFDSYGND. Positions 104-118 are enriched in polar residues; the sequence is SIDSNGLSSSGQPMQ. Low complexity-rich tracts occupy residues 135 to 147 and 666 to 677; these read LSSQ…LPHS and QFGDKNLNNNNN. The span at 678-691 shows a compositional bias: acidic residues; sequence NDDDDDYFDEDENE.

Belongs to the SEC15 family. The exocyst complex is composed of sec3/exoc1, sec5/exoc2, sec6/exoc3, sec8/exoc4, sec10/exoc5, sec15/exoc6, exo70/exoc7 and exo84/exoc8.

It is found in the cytoplasm. The protein localises to the perinuclear region. It localises to the midbody. The protein resides in the midbody ring. Functionally, component of the exocyst complex involved in the docking of exocytic vesicles with fusion sites on the plasma membrane. This chain is Exocyst complex component 6 (exoc6), found in Dictyostelium discoideum (Social amoeba).